Consider the following 158-residue polypeptide: SsrA-binding protein (158 aa).

It belongs to the SmpB family.

The protein localises to the cytoplasm. Its function is as follows. Required for rescue of stalled ribosomes mediated by trans-translation. Binds to transfer-messenger RNA (tmRNA), required for stable association of tmRNA with ribosomes. tmRNA and SmpB together mimic tRNA shape, replacing the anticodon stem-loop with SmpB. tmRNA is encoded by the ssrA gene; the 2 termini fold to resemble tRNA(Ala) and it encodes a 'tag peptide', a short internal open reading frame. During trans-translation Ala-aminoacylated tmRNA acts like a tRNA, entering the A-site of stalled ribosomes, displacing the stalled mRNA. The ribosome then switches to translate the ORF on the tmRNA; the nascent peptide is terminated with the 'tag peptide' encoded by the tmRNA and targeted for degradation. The ribosome is freed to recommence translation, which seems to be the essential function of trans-translation. The protein is SsrA-binding protein of Psychrobacter sp. (strain PRwf-1).